The following is a 209-amino-acid chain: Glycerol-3-phosphate acyltransferase (209 aa).

5 helical membrane-spanning segments follow: residues 4–24, 53–75, 80–102, 112–132, and 138–158; these read IAIG…AILI, LAAA…IGYG, PFWL…FFHF, LGAI…TWLL, and GYSS…VWWF.

Belongs to the PlsY family. In terms of assembly, probably interacts with PlsX.

Its subcellular location is the cell inner membrane. The enzyme catalyses an acyl phosphate + sn-glycerol 3-phosphate = a 1-acyl-sn-glycero-3-phosphate + phosphate. Its pathway is lipid metabolism; phospholipid metabolism. Its function is as follows. Catalyzes the transfer of an acyl group from acyl-phosphate (acyl-PO(4)) to glycerol-3-phosphate (G3P) to form lysophosphatidic acid (LPA). This enzyme utilizes acyl-phosphate as fatty acyl donor, but not acyl-CoA or acyl-ACP. The polypeptide is Glycerol-3-phosphate acyltransferase (Sodalis glossinidius (strain morsitans)).